The chain runs to 390 residues: Transforming growth factor beta-1 proprotein (390 aa).

A signal peptide spans 1–29 (MPPSGLRLLPLLLPLPWLLVLTPGRPAAG). The segment at 30-74 (LSTCKTIDMELVKRKRIEAIRGQILSKLRLASPPSQGEVPPGPLP) is straightjacket domain. An arm domain region spans residues 75–271 (EAVLALYNST…ATPLERAQHL (197 aa)). N-linked (GlcNAc...) asparagine glycans are attached at residues Asn-82, Asn-136, and Asn-176. The interval 226 to 252 (DSKDNKLHVEINGISPKRRGDLGTIHD) is bowtie tail. The short motif at 244–246 (RGD) is the Cell attachment site element. 4 disulfide bridges follow: Cys-285–Cys-294, Cys-293–Cys-356, Cys-322–Cys-387, and Cys-326–Cys-389.

It belongs to the TGF-beta family. Homodimer; disulfide-linked. Interacts with the serine proteases, HTRA1 and HTRA3: the interaction with either inhibits TGFB1-mediated signaling and the HTRA protease activity is required for this inhibition. May interact with THSD4; this interaction may lead to sequestration by FBN1 microfibril assembly and attenuation of TGFB signaling. Interacts with CD109, DPT and ASPN. Interacts with EFEMP2. Interacts with TSKU; the interaction contributes to regulation of the hair cycle. Interacts with TGFBR3. As to quaternary structure, homodimer; disulfide-linked. Interacts with transforming growth factor beta-1 (TGF-beta-1) chain; interaction is non-covalent and maintains TGF-beta-1 in a latent state; each latency-associated peptide (LAP) monomer interacts with TGF-beta-1 in the other monomer. Interacts with LTBP1; leading to regulation of TGF-beta-1 activation. Interacts with LRRC32/GARP; leading to regulation of TGF-beta-1 activation on the surface of activated regulatory T-cells (Tregs). Interacts with LRRC33/NRROS; leading to regulation of TGF-beta-1 activation in macrophages and microglia. Interacts (via cell attachment site) with integrins ITGAV and ITGB6 (ITGAV:ITGB6), leading to release of the active TGF-beta-1. Interacts with NREP; the interaction results in a decrease in TGFB1 autoinduction. Interacts with HSP90AB1; inhibits latent TGFB1 activation. In terms of assembly, homodimer; disulfide-linked. Interacts with TGF-beta receptors (TGFBR1 and TGFBR2), leading to signal transduction. In terms of processing, transforming growth factor beta-1 proprotein: The precursor proprotein is cleaved in the Golgi apparatus by FURIN to form Transforming growth factor beta-1 (TGF-beta-1) and Latency-associated peptide (LAP) chains, which remain non-covalently linked, rendering TGF-beta-1 inactive. N-glycosylated. Deglycosylation leads to activation of Transforming growth factor beta-1 (TGF-beta-1); mechanisms triggering deglycosylation-driven activation of TGF-beta-1 are however unclear. Expressed in cardiomyocytes. Weakly expressed in the mammary glands, with a slight increase of expression following onset of involution.

It localises to the secreted. The protein resides in the extracellular space. Its subcellular location is the extracellular matrix. Transforming growth factor beta-1 proprotein: Precursor of the Latency-associated peptide (LAP) and Transforming growth factor beta-1 (TGF-beta-1) chains, which constitute the regulatory and active subunit of TGF-beta-1, respectively. Functionally, required to maintain the Transforming growth factor beta-1 (TGF-beta-1) chain in a latent state during storage in extracellular matrix. Associates non-covalently with TGF-beta-1 and regulates its activation via interaction with 'milieu molecules', such as LTBP1, LRRC32/GARP and LRRC33/NRROS, that control activation of TGF-beta-1. Interaction with LRRC33/NRROS regulates activation of TGF-beta-1 in macrophages and microglia. Interaction with LRRC32/GARP controls activation of TGF-beta-1 on the surface of activated regulatory T-cells (Tregs). Interaction with integrins (ITGAV:ITGB6 or ITGAV:ITGB8) results in distortion of the Latency-associated peptide chain and subsequent release of the active TGF-beta-1. Its function is as follows. Multifunctional protein that regulates the growth and differentiation of various cell types and is involved in various processes, such as normal development, immune function, microglia function and responses to neurodegeneration. Activation into mature form follows different steps: following cleavage of the proprotein in the Golgi apparatus, Latency-associated peptide (LAP) and Transforming growth factor beta-1 (TGF-beta-1) chains remain non-covalently linked rendering TGF-beta-1 inactive during storage in extracellular matrix. At the same time, LAP chain interacts with 'milieu molecules', such as LTBP1, LRRC32/GARP and LRRC33/NRROS that control activation of TGF-beta-1 and maintain it in a latent state during storage in extracellular milieus. TGF-beta-1 is released from LAP by integrins (ITGAV:ITGB6 or ITGAV:ITGB8): integrin-binding to LAP stabilizes an alternative conformation of the LAP bowtie tail and results in distortion of the LAP chain and subsequent release of the active TGF-beta-1. Once activated following release of LAP, TGF-beta-1 acts by binding to TGF-beta receptors (TGFBR1 and TGFBR2), which transduce signal. While expressed by many cells types, TGF-beta-1 only has a very localized range of action within cell environment thanks to fine regulation of its activation by Latency-associated peptide chain (LAP) and 'milieu molecules'. Plays an important role in bone remodeling: acts as a potent stimulator of osteoblastic bone formation, causing chemotaxis, proliferation and differentiation in committed osteoblasts. Can promote either T-helper 17 cells (Th17) or regulatory T-cells (Treg) lineage differentiation in a concentration-dependent manner. At high concentrations, leads to FOXP3-mediated suppression of RORC and down-regulation of IL-17 expression, favoring Treg cell development. At low concentrations in concert with IL-6 and IL-21, leads to expression of the IL-17 and IL-23 receptors, favoring differentiation to Th17 cells. Stimulates sustained production of collagen through the activation of CREB3L1 by regulated intramembrane proteolysis (RIP). Mediates SMAD2/3 activation by inducing its phosphorylation and subsequent translocation to the nucleus. Positively regulates odontoblastic differentiation in dental papilla cells, via promotion of IPO7-mediated translocation of phosphorylated SMAD2 to the nucleus and subsequent transcription of target genes. Can induce epithelial-to-mesenchymal transition (EMT) and cell migration in various cell types. This Mus musculus (Mouse) protein is Transforming growth factor beta-1 proprotein.